Reading from the N-terminus, the 463-residue chain is Dopaminechrome tautomerase (463 aa).

It belongs to the major royal jelly protein family.

It localises to the secreted. The enzyme catalyses dopaminechrome = 5,6-dihydroxyindole. It participates in pigment biosynthesis; melanin biosynthesis. In terms of biological role, catalyzes the conversion of dopaminechrome to 5,6-dihydroxyindole in the eumelanin biosynthetic pathway originating from dopamine. Catalyzes tautomerization of dopaminechrome to 5,6-dihydroxyindole during eumelanin biosynthesis. Acts both dopaminechrome and N-methyl dopaminechrome but not on dopachrome or other aminochromes tested. The sequence is that of Dopaminechrome tautomerase from Drosophila melanogaster (Fruit fly).